A 2286-amino-acid polypeptide reads, in one-letter code: Non-reducing polyketide synthase fsr1 (2286 aa).

The interval 7 to 342 is N-terminal acylcarrier protein transacylase domain (SAT); it reads LYLFGDQTFD…IYTALKKTSL (336 aa). The region spanning 368-805 is the Ketosynthase family 3 (KS3) domain; that stretch reads KPKLAIVAMS…GGNSALLIQD (438 aa). Active-site for beta-ketoacyl synthase activity residues include C540, H675, and H722. Residues 905 to 1195 form an acyl/malonyl transferases region; it reads VFTFTGQGAQ…GMVKPTLGQQ (291 aa). The active-site For acyl/malonyl transferase activity is the S996. The interval 1285-1417 is N-terminal hotdog fold; the sequence is HSVVEESGDS…CVVLFKDRSH (133 aa). The PKS/mFAS DH domain maps to 1285 to 1591; it reads HSVVEESGDS…IQGVPRRVLK (307 aa). The interval 1296–1588 is product template (PT) domainn; sequence KTGIVVEADI…QIAIQGVPRR (293 aa). Catalysis depends on H1317, which acts as the Proton acceptor; for dehydratase activity. The C-terminal hotdog fold stretch occupies residues 1444-1591; sequence SARFNRPMAY…IQGVPRRVLK (148 aa). D1504 functions as the Proton donor; for dehydratase activity in the catalytic mechanism. Positions 1600–1639 are disordered; it reads KKGQPQRQTQDKPRNTPSQTKDSTPKPAQNKPAAKVEPPK. Positions 1637-1712 constitute a Carrier 1 domain; sequence PPKFSTAIRI…DLRAFLGADE (76 aa). S1671 bears the O-(pantetheine 4'-phosphoryl)serine mark. The interval 1716–1735 is disordered; the sequence is ESSSSAASDSGRDTTTTGSA. Residues 1748-1823 form the Carrier 2 domain; that stretch reads EVEFERALEI…DLKTMLAREM (76 aa). An O-(pantetheine 4'-phosphoryl)serine modification is found at S1782. The segment at 1897 to 2145 is reductase (R) domain; the sequence is VTGASGGLGS…NWTPVNDIAD (249 aa).

The protein operates within polyketide biosynthesis. Non-reducing polyketide synthase; part of the gene cluster that mediates the biosynthesis of fusarubins, highly pigmented naphthoquinones responsible for the coloration of the fruiting bodies. The non-reducing polyketide synthase FSR1 is responsible for the condensation of seven acetyl-CoA units to yield a haptaketide. After rings A and B are formed by aldol-type cyclization, the PKS-derived product is released as 6-O-demethylfusarubinaldehyde. Then, two hydroxyl groups at C-5 and C-10 are incorporated by FSR3, and simultaneously hydroxyl groups at C-6 and C-8 are methylated by FSR2. The aldehyde is, on the one hand, reduced by FSR3 to 8-O-methylfusarubin alcohol, which equilibrates mainly with 8-O-methylfusarubin and only small amounts of 8-O-methylnectriafurone. On the other hand, the aldehyde can be oxidized to form 8-O-methylfusarubinic acid, a reaction driven by FSR3 equilibrating with 8-O-methylfusarubinlactone, finally resulting in 8-O-methylanhydrofusarubinlactol after a further reduction step and loss of water. 8-O-Methylfusarubinic acid can also undergo decarboxylation, resulting in 8-O-methyl-13-hydroxynorjavanicin after another hydroxylation step at C-13. Both steps are most likely also accomplished by FSR3. No enzymatic function has been determined so far for either FSR4 and FSR5. Their deletion does not alter the product spectrum, but the possibility that they catalyze specific enzymatic steps during perithecium development cannot be ruled out. FSR4 might possess a regulatory function in the biosynthesis of fusarubins. The protein is Non-reducing polyketide synthase fsr1 of Gibberella fujikuroi (strain CBS 195.34 / IMI 58289 / NRRL A-6831) (Bakanae and foot rot disease fungus).